A 419-amino-acid chain; its full sequence is Maltoporin 2 (419 aa).

The signal sequence occupies residues 1–23 (MKTSLRTLSVALAAALVSPSVLA).

It belongs to the porin LamB (TC 1.B.3) family. In terms of assembly, homotrimer formed of three 18-stranded antiparallel beta-barrels, containing three independent channels.

It localises to the cell outer membrane. The catalysed reaction is beta-maltose(in) = beta-maltose(out). Functionally, involved in the transport of maltose and maltodextrins. The polypeptide is Maltoporin 2 (Yersinia pestis bv. Antiqua (strain Antiqua)).